Reading from the N-terminus, the 455-residue chain is UDP-N-acetylmuramoylalanine--D-glutamate ligase (455 aa).

119–125 is a binding site for ATP; the sequence is GTNGKTT.

It belongs to the MurCDEF family.

The protein resides in the cytoplasm. It carries out the reaction UDP-N-acetyl-alpha-D-muramoyl-L-alanine + D-glutamate + ATP = UDP-N-acetyl-alpha-D-muramoyl-L-alanyl-D-glutamate + ADP + phosphate + H(+). It participates in cell wall biogenesis; peptidoglycan biosynthesis. Functionally, cell wall formation. Catalyzes the addition of glutamate to the nucleotide precursor UDP-N-acetylmuramoyl-L-alanine (UMA). The polypeptide is UDP-N-acetylmuramoylalanine--D-glutamate ligase (Listeria monocytogenes serovar 1/2a (strain ATCC BAA-679 / EGD-e)).